The following is a 338-amino-acid chain: Mitochondrial genome maintenance exonuclease 1 (338 aa).

A mitochondrion-targeting transit peptide spans 1 to 64 (MKLPLTFCRL…RSVLSRGPAQ (64 aa)). Active-site residues include D235, D248, and K250.

Belongs to the MGME1 family.

It localises to the mitochondrion. Its function is as follows. Metal-dependent single-stranded DNA (ssDNA) exonuclease involved in mitochondrial genome maintenance. Has preference for 5'-3' exonuclease activity but is also capable of endonuclease activity on linear substrates. Necessary for maintenance of proper 7S DNA levels. Probably involved in mitochondrial DNA (mtDNA) repair, possibly via the processing of displaced DNA containing Okazaki fragments during RNA-primed DNA synthesis on the lagging strand or via processing of DNA flaps during long-patch base excision repair. Specifically binds 5-hydroxymethylcytosine (5hmC)-containing DNA in stem cells. This Mus musculus (Mouse) protein is Mitochondrial genome maintenance exonuclease 1 (Mgme1).